Here is a 149-residue protein sequence, read N- to C-terminus: Nucleoside diphosphate kinase (149 aa).

Lys9, Phe57, Arg85, Thr91, Arg102, and Asn112 together coordinate ATP. His115 (pros-phosphohistidine intermediate) is an active-site residue.

The protein belongs to the NDK family. In terms of assembly, homotetramer. It depends on Mg(2+) as a cofactor.

It is found in the cytoplasm. The enzyme catalyses a 2'-deoxyribonucleoside 5'-diphosphate + ATP = a 2'-deoxyribonucleoside 5'-triphosphate + ADP. It carries out the reaction a ribonucleoside 5'-diphosphate + ATP = a ribonucleoside 5'-triphosphate + ADP. Its function is as follows. Major role in the synthesis of nucleoside triphosphates other than ATP. The ATP gamma phosphate is transferred to the NDP beta phosphate via a ping-pong mechanism, using a phosphorylated active-site intermediate. The polypeptide is Nucleoside diphosphate kinase (Staphylococcus saprophyticus subsp. saprophyticus (strain ATCC 15305 / DSM 20229 / NCIMB 8711 / NCTC 7292 / S-41)).